A 217-amino-acid polypeptide reads, in one-letter code: Acyl-homoserine-lactone synthase (217 aa).

This sequence belongs to the autoinducer synthase family.

It catalyses the reaction a fatty acyl-[ACP] + S-adenosyl-L-methionine = an N-acyl-L-homoserine lactone + S-methyl-5'-thioadenosine + holo-[ACP] + H(+). In terms of biological role, required for the synthesis of OHHL (N-(3-oxohexanoyl)-L-homoserine lactone), an autoinducer molecule which binds to ExpR and thus acts in virulence (soft rot disease) through the activation of genes for plant tissue macerating enzymes. This chain is Acyl-homoserine-lactone synthase (expI), found in Pectobacterium parmentieri.